The chain runs to 163 residues: Lipoprotein signal peptidase (163 aa).

4 helical membrane passes run 9-29 (AWPW…SKYL), 42-62 (ILPF…SFLG), 67-87 (WQII…ILWL), and 93-113 (SEIM…GNFI). Residues D123 and D141 contribute to the active site. The chain crosses the membrane as a helical span at residues 137–157 (FNVADSAICVGVFLLIVYMLL).

Belongs to the peptidase A8 family.

It localises to the cell inner membrane. It carries out the reaction Release of signal peptides from bacterial membrane prolipoproteins. Hydrolyzes -Xaa-Yaa-Zaa-|-(S,diacylglyceryl)Cys-, in which Xaa is hydrophobic (preferably Leu), and Yaa (Ala or Ser) and Zaa (Gly or Ala) have small, neutral side chains.. It functions in the pathway protein modification; lipoprotein biosynthesis (signal peptide cleavage). This protein specifically catalyzes the removal of signal peptides from prolipoproteins. This is Lipoprotein signal peptidase from Coxiella burnetii (strain Dugway 5J108-111).